A 75-amino-acid chain; its full sequence is Small ribosomal subunit protein bS18c (75 aa).

The protein belongs to the bacterial ribosomal protein bS18 family. Part of the 30S ribosomal subunit.

It is found in the plastid. The protein resides in the chloroplast. This chain is Small ribosomal subunit protein bS18c, found in Psilotum nudum (Whisk fern).